The sequence spans 147 residues: Small ribosomal subunit protein eS10B (147 aa).

The disordered stretch occupies residues 90–147 (THKRQVRPAAPRAGRPEPRERSSAADAGYRRAEKKDDGAAPGGFAPSFRGGFGRPVAA). Over residues 103–127 (GRPEPRERSSAADAGYRRAEKKDDG) the composition is skewed to basic and acidic residues.

It belongs to the eukaryotic ribosomal protein eS10 family. In terms of assembly, component of the small ribosomal subunit (SSU). Mature yeast ribosomes consist of a small (40S) and a large (60S) subunit. The 40S small subunit contains 1 molecule of ribosomal RNA (18S rRNA) and at least 33 different proteins. The large 60S subunit contains 3 rRNA molecules (25S, 5.8S and 5S rRNA) and at least 46 different proteins. eS10 interacts with GCN1 (via middle region); this interaction is direct and promotes GCN2 kinase activity.

Its subcellular location is the cytoplasm. In terms of biological role, component of the ribosome, a large ribonucleoprotein complex responsible for the synthesis of proteins in the cell. The small ribosomal subunit (SSU) binds messenger RNAs (mRNAs) and translates the encoded message by selecting cognate aminoacyl-transfer RNA (tRNA) molecules. The large subunit (LSU) contains the ribosomal catalytic site termed the peptidyl transferase center (PTC), which catalyzes the formation of peptide bonds, thereby polymerizing the amino acids delivered by tRNAs into a polypeptide chain. The nascent polypeptides leave the ribosome through a tunnel in the LSU and interact with protein factors that function in enzymatic processing, targeting, and the membrane insertion of nascent chains at the exit of the ribosomal tunnel. eS10 plays a role as a positive regulator of the GCN2 kinase activity by stimulating GCN1-mediated GCN2 activation. This chain is Small ribosomal subunit protein eS10B (rps1002), found in Schizosaccharomyces pombe (strain 972 / ATCC 24843) (Fission yeast).